The primary structure comprises 342 residues: Platelet-activating factor receptor (342 aa).

Residues 1-16 are Extracellular-facing; it reads MEPHDSSHMDSEFRYT. Residues 17–38 form a helical membrane-spanning segment; the sequence is LFPIVYSIIFVLGVIANGYVLW. The Cytoplasmic segment spans residues 39–54; that stretch reads VFARLYPCKKFNEIKI. Residues 55–74 traverse the membrane as a helical segment; the sequence is FMVNLTMADMLFLITLPLWI. At 75 to 91 the chain is on the extracellular side; the sequence is VYYQNQGNWILPKFLCN. Cysteine 90 and cysteine 173 are oxidised to a cystine. Residues 92 to 113 traverse the membrane as a helical segment; sequence VAGCLFFINTYCSVAFLGVITY. Residues 114–133 lie on the Cytoplasmic side of the membrane; the sequence is NRFQAVTRPIKTAQANTRKR. Residues 134–155 form a helical membrane-spanning segment; it reads GISLSLVIWVAIVGAASYFLIL. The Extracellular segment spans residues 156–184; sequence DSTNTVPDSAGSGNVTRCFEHYEKGSVPV. Asparagine 169 carries N-linked (GlcNAc...) asparagine glycosylation. Residues 185–205 form a helical membrane-spanning segment; sequence LIIHIFIVFSFFLVFLIILFC. The Cytoplasmic segment spans residues 206–233; the sequence is NLVIIRTLLMQPVQQQRNAEVKRRALWM. A helical membrane pass occupies residues 234 to 254; that stretch reads VCTVLAVFIICFVPHHVVQLP. At 255–276 the chain is on the extracellular side; sequence WTLAELGFQDSKFHQAINDAHQ. Residues 277-296 traverse the membrane as a helical segment; the sequence is VTLCLLSTNCVLDPVIYCFL. The Cytoplasmic portion of the chain corresponds to 297 to 342; that stretch reads TKKFRKHLTEKFYSMRSSRKCSRATTDTVTEVVVPFNQIPGNSLKN.

The protein belongs to the G-protein coupled receptor 1 family. Interacts with ARRB1. In terms of tissue distribution, expressed in the placenta, lung, left and right heart ventricles, heart atrium, leukocytes and differentiated HL-60 granulocytes.

The protein resides in the cell membrane. Receptor for platelet activating factor, a chemotactic phospholipid mediator that possesses potent inflammatory, smooth-muscle contractile and hypotensive activity. Seems to mediate its action via a G protein that activates a phosphatidylinositol-calcium second messenger system. In Homo sapiens (Human), this protein is Platelet-activating factor receptor (PTAFR).